A 346-amino-acid chain; its full sequence is Very-long-chain 3-oxoacyl-CoA reductase (346 aa).

The chain crosses the membrane as a helical span at residues 19 to 39; sequence VLLGALLVGVFKLTVFILSVT. NADP(+) is bound by residues Val65, Asp119, Asn146, Tyr220, Lys224, Val253, and Ser255. Tyr220 functions as the Proton donor in the catalytic mechanism. Catalysis depends on Lys224, which acts as the Lowers pKa of active site Tyr.

The protein belongs to the short-chain dehydrogenases/reductases (SDR) family.

The protein localises to the endoplasmic reticulum membrane. The enzyme catalyses a very-long-chain (3R)-3-hydroxyacyl-CoA + NADP(+) = a very-long-chain 3-oxoacyl-CoA + NADPH + H(+). The protein operates within lipid metabolism; fatty acid biosynthesis. In terms of biological role, component of the microsomal membrane bound fatty acid elongation system, which produces the 26-carbon very long-chain fatty acids (VLCFA) from palmitate. Catalyzes the reduction of the 3-ketoacyl-CoA intermediate that is formed in each cycle of fatty acid elongation. VLCFAs serve as precursors for ceramide and sphingolipids. In Scheffersomyces stipitis (strain ATCC 58785 / CBS 6054 / NBRC 10063 / NRRL Y-11545) (Yeast), this protein is Very-long-chain 3-oxoacyl-CoA reductase.